Reading from the N-terminus, the 454-residue chain is tRNA modification GTPase MnmE (454 aa).

(6S)-5-formyl-5,6,7,8-tetrahydrofolate contacts are provided by arginine 23, glutamate 80, and lysine 120. The 162-residue stretch at 216-377 (GMKVVIAGRP…LRDHLKQSMG (162 aa)) folds into the TrmE-type G domain. Asparagine 226 is a K(+) binding site. Residues 226 to 231 (NAGKSS), 245 to 251 (TAIAGTT), 270 to 273 (DTAG), 335 to 338 (NKAD), and 358 to 360 (SAR) contribute to the GTP site. Serine 230 lines the Mg(2+) pocket. The K(+) site is built by threonine 245, isoleucine 247, and threonine 250. Residue threonine 251 participates in Mg(2+) binding. Lysine 454 contacts (6S)-5-formyl-5,6,7,8-tetrahydrofolate.

Belongs to the TRAFAC class TrmE-Era-EngA-EngB-Septin-like GTPase superfamily. TrmE GTPase family. In terms of assembly, homodimer. Heterotetramer of two MnmE and two MnmG subunits. K(+) is required as a cofactor.

It is found in the cytoplasm. Functionally, exhibits a very high intrinsic GTPase hydrolysis rate. Involved in the addition of a carboxymethylaminomethyl (cmnm) group at the wobble position (U34) of certain tRNAs, forming tRNA-cmnm(5)s(2)U34. This Pectobacterium atrosepticum (strain SCRI 1043 / ATCC BAA-672) (Erwinia carotovora subsp. atroseptica) protein is tRNA modification GTPase MnmE.